The sequence spans 116 residues: Large ribosomal subunit protein bL17 (116 aa).

It belongs to the bacterial ribosomal protein bL17 family. In terms of assembly, part of the 50S ribosomal subunit. Contacts protein L32.

The polypeptide is Large ribosomal subunit protein bL17 (Helicobacter pylori (strain G27)).